The primary structure comprises 332 residues: MEVAEPSCPTEEEEEEEEEEEQSAEPRPRTRSNPEGAEDRALGAQTSVGSRSEGEGEAASADDGTANPPGAGPKPWQVPPPAPEVQVRTPRVNCPEKVIICLDLSEEMALPKLESFNGSKTNALNVSQKMIEMFVRTKHKIDKSHEFALVVVNDDTAWLSGLTSDPRELCSCLYDLETASCSTFNLEGLFSLIQQKTELPVTENVQTIPPPYVVRTILVYSRPPCQPQFSLTEPMKKMFQCPYFFFDVVYIHNGADEKEEEMSWKDMFAFMGSLDTKGTSYKYEVALAGPALELHNCMAKLLAHPLQRPCQSHASYSLLEEDDEATEVEATV.

M1 is subject to N-acetylmethionine. Residues 1 to 88 form a disordered region; the sequence is MEVAEPSCPT…PPPAPEVQVR (88 aa). Acidic residues predominate over residues 10–23; sequence TEEEEEEEEEEEQS. 3 positions are modified to phosphoserine: S32, S52, and S60. Residues 70 to 83 show a composition bias toward pro residues; it reads GAGPKPWQVPPPAP. The interval 98 to 301 is VWFA-like; the sequence is VIICLDLSEE…LELHNCMAKL (204 aa).

The protein belongs to the BABAM1 family. In terms of assembly, component of the ARISC complex, at least composed of UIMC1/RAP80, ABRAXAS1, BRCC3/BRCC36, BABAM2 and BABAM1/NBA1. Component of the BRCA1-A complex, at least composed of BRCA1, BARD1, UIMC1/RAP80, ABRAXAS1, BRCC3/BRCC36, BABAM2 and BABAM1/NBA1. In the BRCA1-A complex, interacts directly with ABRAXAS1 and BABAM2. Component of the BRISC complex, at least composed of ABRAXAS2, BRCC3/BRCC36, BABAM2 and BABAM1/NBA1. Identified in a complex with SHMT2 and the other subunits of the BRISC complex.

It localises to the cytoplasm. It is found in the nucleus. Functionally, component of the BRCA1-A complex, a complex that specifically recognizes 'Lys-63'-linked ubiquitinated histones H2A and H2AX at DNA lesions sites, leading to target the BRCA1-BARD1 heterodimer to sites of DNA damage at double-strand breaks (DSBs). The BRCA1-A complex also possesses deubiquitinase activity that specifically removes 'Lys-63'-linked ubiquitin on histones H2A and H2AX. In the BRCA1-A complex, it is required for the complex integrity and its localization at DSBs. Component of the BRISC complex, a multiprotein complex that specifically cleaves 'Lys-63'-linked ubiquitin in various substrates. In these 2 complexes, it is probably required to maintain the stability of BABAM2 and help the 'Lys-63'-linked deubiquitinase activity mediated by BRCC3/BRCC36 component. The BRISC complex is required for normal mitotic spindle assembly and microtubule attachment to kinetochores via its role in deubiquitinating NUMA1. Plays a role in interferon signaling via its role in the deubiquitination of the interferon receptor IFNAR1; deubiquitination increases IFNAR1 activity by enhancing its stability and cell surface expression. Down-regulates the response to bacterial lipopolysaccharide (LPS) via its role in IFNAR1 deubiquitination. This is BRISC and BRCA1-A complex member 1 (BABAM1) from Bos taurus (Bovine).